The primary structure comprises 519 residues: Fatty acid--[acyl-carrier-protein] ligase ScoC (519 aa).

Thr-167 provides a ligand contact to Mg(2+). Residues Ile-216 and Thr-312 each contribute to the ATP site. Glu-313 is a Mg(2+) binding site. The ATP site is built by Asp-394 and Lys-411.

It belongs to the ATP-dependent AMP-binding enzyme family. Mg(2+) serves as cofactor.

The enzyme catalyses a medium-chain fatty acid + holo-[ACP] + ATP = a medium-chain fatty acyl-[ACP] + AMP + diphosphate. It carries out the reaction a medium-chain fatty acid + ATP + H(+) = a medium-chain fatty acyl-AMP + diphosphate. The catalysed reaction is a medium-chain fatty acyl-AMP + holo-[ACP] = a medium-chain fatty acyl-[ACP] + AMP + H(+). It catalyses the reaction octanoate + holo-[ACP] + ATP = octanoyl-[ACP] + AMP + diphosphate. The enzyme catalyses octanoate + ATP + H(+) = octanoyl-AMP + diphosphate. It carries out the reaction octanoyl-AMP + holo-[ACP] = octanoyl-[ACP] + AMP + H(+). The catalysed reaction is a (2E)-enoyl fatty acid + holo-[ACP] + ATP = a (2E)-enoyl-[ACP] + AMP + diphosphate. It catalyses the reaction a (2E)-enoyl fatty acid + ATP + H(+) = a (2E)-2-fatty-enoyl-AMP + diphosphate. The enzyme catalyses a (2E)-2-fatty-enoyl-AMP + holo-[ACP] = a (2E)-enoyl-[ACP] + AMP + H(+). It carries out the reaction (2E)-2-butenoate + holo-[ACP] + ATP = (2E)-butenoyl-[ACP] + AMP + diphosphate. The catalysed reaction is (2E)-2-butenoate + ATP + H(+) = (2E)-but-2-enoyl-AMP + diphosphate. It catalyses the reaction (2E)-but-2-enoyl-AMP + holo-[ACP] = (2E)-butenoyl-[ACP] + AMP + H(+). The enzyme catalyses a (3R)-3-isocyanyl-fatty acid + holo-[ACP] + ATP = a (3R)-3-isocyanyl-fatty acyl-[ACP] + AMP + diphosphate. It carries out the reaction a (3R)-3-isocyanyl-fatty acid + ATP + H(+) = a (3R)-3-isocyanyl-fatty acyl-AMP + diphosphate. The catalysed reaction is a (3R)-3-isocyanyl-fatty acyl-AMP + holo-[ACP] = a (3R)-3-isocyanyl-fatty acyl-[ACP] + AMP + H(+). It catalyses the reaction (3R)-3-isocyanylbutanoate + holo-[ACP] + ATP = (3R)-3-isocyanylbutanoyl-[ACP] + AMP + diphosphate. The enzyme catalyses (3R)-3-isocyanylbutanoate + ATP + H(+) = (3R)-3-isocyanylbutanoyl-AMP + diphosphate. It carries out the reaction (3R)-3-isocyanylbutanoyl-AMP + holo-[ACP] = (3R)-3-isocyanylbutanoyl-[ACP] + AMP + H(+). In terms of biological role, acyl:acyl-carrier protein ligase involved in the biosynthesis of a unique class of isonitrile lipopeptides (INLPs). Shows a strong preference for fatty acids with a short/medium-chain length (C4-C8) in vitro, and accepts alpha,beta-unsaturated fatty acids such as crotonate, which seems to be a physiological substrate. Acts twice during the INLP pathway, catalyzing the activation of crotonate ((2E)-2-butenoate) as well as (3R)-3-isocyanylbutanoate as acyl-adenylates (acyl-AMP), and then the acyl transfer to the dedicated acyl-carrier protein ScoB. The chain is Fatty acid--[acyl-carrier-protein] ligase ScoC from Streptomyces coeruleorubidus.